The chain runs to 354 residues: Uroporphyrinogen decarboxylase (354 aa).

Substrate contacts are provided by residues 30 to 34 (RQAGR), Asp-79, Tyr-154, Ser-209, and His-333.

It belongs to the uroporphyrinogen decarboxylase family. As to quaternary structure, homodimer.

The protein resides in the cytoplasm. It catalyses the reaction uroporphyrinogen III + 4 H(+) = coproporphyrinogen III + 4 CO2. It functions in the pathway porphyrin-containing compound metabolism; protoporphyrin-IX biosynthesis; coproporphyrinogen-III from 5-aminolevulinate: step 4/4. Catalyzes the decarboxylation of four acetate groups of uroporphyrinogen-III to yield coproporphyrinogen-III. The chain is Uroporphyrinogen decarboxylase from Mycobacterium sp. (strain JLS).